A 41-amino-acid chain; its full sequence is Large ribosomal subunit protein bL36B (41 aa).

Belongs to the bacterial ribosomal protein bL36 family.

The chain is Large ribosomal subunit protein bL36B from Haemophilus ducreyi (strain 35000HP / ATCC 700724).